Reading from the N-terminus, the 360-residue chain is Neutral protease 2 homolog SS1G_13741 (360 aa).

Asn129 carries an N-linked (GlcNAc...) asparagine glycan. 2 disulfide bridges follow: Cys189–Cys261 and Cys268–Cys286. His311 contacts Zn(2+). Glu312 is a catalytic residue. Zn(2+) contacts are provided by His315 and Asp326.

It belongs to the peptidase M35 family. Zn(2+) serves as cofactor.

It localises to the secreted. The enzyme catalyses Preferential cleavage of bonds with hydrophobic residues in P1'. Also 3-Asn-|-Gln-4 and 8-Gly-|-Ser-9 bonds in insulin B chain.. Secreted metalloproteinase that allows assimilation of proteinaceous substrates. Shows high activities on basic nuclear substrates such as histone and protamine. The sequence is that of Neutral protease 2 homolog SS1G_13741 from Sclerotinia sclerotiorum (strain ATCC 18683 / 1980 / Ss-1) (White mold).